The chain runs to 370 residues: Anhydro-N-acetylmuramic acid kinase (370 aa).

G13 to D20 lines the ATP pocket.

This sequence belongs to the anhydro-N-acetylmuramic acid kinase family.

The catalysed reaction is 1,6-anhydro-N-acetyl-beta-muramate + ATP + H2O = N-acetyl-D-muramate 6-phosphate + ADP + H(+). It participates in amino-sugar metabolism; 1,6-anhydro-N-acetylmuramate degradation. Its pathway is cell wall biogenesis; peptidoglycan recycling. Functionally, catalyzes the specific phosphorylation of 1,6-anhydro-N-acetylmuramic acid (anhMurNAc) with the simultaneous cleavage of the 1,6-anhydro ring, generating MurNAc-6-P. Is required for the utilization of anhMurNAc either imported from the medium or derived from its own cell wall murein, and thus plays a role in cell wall recycling. The chain is Anhydro-N-acetylmuramic acid kinase from Vibrio vulnificus (strain YJ016).